Consider the following 238-residue polypeptide: Fmr1 neighbor protein (238 aa).

The disordered stretch occupies residues 1–30; sequence MPSDRRPSQRRNRSKSRDYRGARSKVTRAD. Residues 1 to 79 are Cytoplasmic-facing; the sequence is MPSDRRPSQR…CLQYLWARRH (79 aa). Residues 15–30 show a composition bias toward basic and acidic residues; it reads KSRDYRGARSKVTRAD. The chain crosses the membrane as a helical span at residues 80–100; it reads LGLLLLLFWTLVILFRPVNTA. The Extracellular segment spans residues 101–178; that stretch reads KLPILAEAAE…VRDKPTQVLR (78 aa). One can recognise a P-type domain in the interval 118 to 176; that stretch reads MLDFFFPTACIIRDNQVVVACNNQPYLSESECLKSKCCSSTSGTIIKCYAPVRDKPTQV. A helical transmembrane segment spans residues 179-199; sequence VFGLAAISILVLGFLPMCCCS. The Cytoplasmic segment spans residues 200–238; that stretch reads MCWRRKRMNRMLKVLKKQKSKGKKPKGRKASEERALLSH. Positions 214–227 are enriched in basic residues; the sequence is LKKQKSKGKKPKGR. A disordered region spans residues 214-238; that stretch reads LKKQKSKGKKPKGRKASEERALLSH. Basic and acidic residues predominate over residues 228 to 238; the sequence is KASEERALLSH.

The protein resides in the membrane. This chain is Fmr1 neighbor protein, found in Mus musculus (Mouse).